Reading from the N-terminus, the 518-residue chain is Bifunctional purine biosynthesis protein PurH (518 aa).

The region spanning 1–144 (MSKRALISVS…KNHAAVTVVC (144 aa)) is the MGS-like domain.

The protein belongs to the PurH family.

It carries out the reaction (6R)-10-formyltetrahydrofolate + 5-amino-1-(5-phospho-beta-D-ribosyl)imidazole-4-carboxamide = 5-formamido-1-(5-phospho-D-ribosyl)imidazole-4-carboxamide + (6S)-5,6,7,8-tetrahydrofolate. The catalysed reaction is IMP + H2O = 5-formamido-1-(5-phospho-D-ribosyl)imidazole-4-carboxamide. The protein operates within purine metabolism; IMP biosynthesis via de novo pathway; 5-formamido-1-(5-phospho-D-ribosyl)imidazole-4-carboxamide from 5-amino-1-(5-phospho-D-ribosyl)imidazole-4-carboxamide (10-formyl THF route): step 1/1. It participates in purine metabolism; IMP biosynthesis via de novo pathway; IMP from 5-formamido-1-(5-phospho-D-ribosyl)imidazole-4-carboxamide: step 1/1. The polypeptide is Bifunctional purine biosynthesis protein PurH (Lactococcus lactis subsp. cremoris (strain SK11)).